A 25-amino-acid chain; its full sequence is Alanine racemase (25 aa).

The protein belongs to the alanine racemase family. As to quaternary structure, homodimer. Requires pyridoxal 5'-phosphate as cofactor.

The catalysed reaction is L-alanine = D-alanine. The protein operates within amino-acid biosynthesis; D-alanine biosynthesis; D-alanine from L-alanine: step 1/1. Functionally, catalyzes the interconversion of L-alanine and D-alanine. This chain is Alanine racemase, found in Pseudomonas fluorescens.